Consider the following 408-residue polypeptide: 1-deoxy-D-xylulose 5-phosphate reductoisomerase (408 aa).

Residues threonine 26, glycine 27, serine 28, isoleucine 29, and asparagine 143 each coordinate NADPH. Residue lysine 144 coordinates 1-deoxy-D-xylulose 5-phosphate. NADPH is bound at residue glutamate 145. Aspartate 167 serves as a coordination point for Mn(2+). 1-deoxy-D-xylulose 5-phosphate is bound by residues serine 168, glutamate 169, serine 193, and histidine 216. Mn(2+) is bound at residue glutamate 169. Glycine 222 is a binding site for NADPH. The 1-deoxy-D-xylulose 5-phosphate site is built by serine 229, asparagine 234, lysine 235, and glutamate 238. Residue glutamate 238 coordinates Mn(2+).

This sequence belongs to the DXR family. Mg(2+) is required as a cofactor. Requires Mn(2+) as cofactor.

It catalyses the reaction 2-C-methyl-D-erythritol 4-phosphate + NADP(+) = 1-deoxy-D-xylulose 5-phosphate + NADPH + H(+). It functions in the pathway isoprenoid biosynthesis; isopentenyl diphosphate biosynthesis via DXP pathway; isopentenyl diphosphate from 1-deoxy-D-xylulose 5-phosphate: step 1/6. Functionally, catalyzes the NADPH-dependent rearrangement and reduction of 1-deoxy-D-xylulose-5-phosphate (DXP) to 2-C-methyl-D-erythritol 4-phosphate (MEP). The chain is 1-deoxy-D-xylulose 5-phosphate reductoisomerase from Corynebacterium jeikeium (strain K411).